Reading from the N-terminus, the 431-residue chain is NADH-quinone oxidoreductase subunit D 2 (431 aa).

The disordered stretch occupies residues 1-27; the sequence is MNDHKGLGGLDTEATPGSFGAGEPPRA.

This sequence belongs to the complex I 49 kDa subunit family. NDH-1 is composed of 14 different subunits. Subunits NuoB, C, D, E, F, and G constitute the peripheral sector of the complex.

The protein resides in the cell inner membrane. It catalyses the reaction a quinone + NADH + 5 H(+)(in) = a quinol + NAD(+) + 4 H(+)(out). In terms of biological role, NDH-1 shuttles electrons from NADH, via FMN and iron-sulfur (Fe-S) centers, to quinones in the respiratory chain. The immediate electron acceptor for the enzyme in this species is believed to be ubiquinone. Couples the redox reaction to proton translocation (for every two electrons transferred, four hydrogen ions are translocated across the cytoplasmic membrane), and thus conserves the redox energy in a proton gradient. This chain is NADH-quinone oxidoreductase subunit D 2, found in Anaeromyxobacter sp. (strain Fw109-5).